We begin with the raw amino-acid sequence, 167 residues long: tRNA-specific adenosine deaminase (167 aa).

A CMP/dCMP-type deaminase domain is found at 6-117 (FSHEYWMRHA…DAKTGAAGSL (112 aa)). His-57 contacts Zn(2+). Glu-59 functions as the Proton donor in the catalytic mechanism. Residues Cys-87 and Cys-90 each contribute to the Zn(2+) site.

Belongs to the cytidine and deoxycytidylate deaminase family. As to quaternary structure, homodimer. Zn(2+) serves as cofactor.

The catalysed reaction is adenosine(34) in tRNA + H2O + H(+) = inosine(34) in tRNA + NH4(+). Functionally, catalyzes the deamination of adenosine to inosine at the wobble position 34 of tRNA(Arg2). Essential for cell viability. This Escherichia coli (strain K12) protein is tRNA-specific adenosine deaminase.